The following is a 107-amino-acid chain: MVNFNQFLKQAQTMQKKMQEAQEQMANTRYTGKAGGGLVEIIATGKGEVEKVSIDASLLKEEEKEMLEDLIKVAFNDAKQKCDSDSQNSMSGALSGMSLPPGFKMPF.

The disordered stretch occupies residues K81–F107.

Belongs to the YbaB/EbfC family. As to quaternary structure, homodimer.

Its subcellular location is the cytoplasm. It is found in the nucleoid. Functionally, binds to DNA and alters its conformation. May be involved in regulation of gene expression, nucleoid organization and DNA protection. This chain is Nucleoid-associated protein A1I_00660, found in Rickettsia bellii (strain OSU 85-389).